Here is a 671-residue protein sequence, read N- to C-terminus: Heat shock transcription factor hsf-1 (671 aa).

Composition is skewed to low complexity over residues 1 to 17 (MQPT…QQQQ) and 38 to 52 (QQAP…NHQN). Residues 1–61 (MQPTGNQIQQ…NGAIGGKKSS (61 aa)) form a disordered region. The interval 89-196 (LPVFLIKLWN…LLSQIKRKQS (108 aa)) is DNA-binding domain. A coiled-coil region spans residues 206-240 (NEQTQQNLEVVMAEMRAMREKAKNMEDKMNKLTKE). 4 disordered regions span residues 329–423 (QEPF…PLTH), 437–493 (YQGA…VNNY), 526–552 (HHPT…GLSP), and 612–671 (NAPE…PNLV). A compositionally biased stretch (polar residues) spans 370–386 (GAQSSRYSDGGATSSRE). The span at 439 to 456 (GASPASGGPSTSSSAPSG) shows a compositional bias: low complexity. Composition is skewed to polar residues over residues 474 to 493 (ATRQ…VNNY) and 528 to 552 (PTTS…GLSP).

The protein belongs to the HSF family. As to quaternary structure, forms homodimers and homotrimers. Component of the DHIC (ddl-1-containing hsf-1 inhibitory complex), which contains at least ddl-1, ddl-2, hsb-1 and hsf-1. Within the complex, interacts with ddl-1. Formation of the DHIC may be dependent upon the Insulin/IGF-1-like signaling (IIS) mediated pathway. Phosphorylated. In terms of processing, sumoylated. Sumoylation may inhibit transcriptional activity in response to heat shock. In terms of tissue distribution, expressed in intestinal cells, body wall muscle cells, and hypodermal cells, as well as many neurons in the head and tail.

The protein resides in the nucleus. It localises to the cytoplasm. In terms of biological role, functions as a stress-inducible and DNA-binding transcription factor, playing a central role in the transcriptional activation of the heat shock response (HSR), leading to the expression of a large class of molecular chaperones, heat shock proteins (HSPs), that protect cells from cellular insult damage. Upon exposure to heat and other stress stimuli, activates gene transcription through binding to site-specific heat shock elements (HSEs) present in the promoter regions of target genes, such as the HSPs. Binds to inverted 5'-NGAAN-3' pentamer DNA sequences in HSEs. Involved in positive modulation of expression of heat shock protein hsp-16.2 in response to heat shock; may act in concert with homeodomain-interacting protein kinase hpk-1. In response to heat shock or starvation, required for the modulation of lifespan, and protection against aberrant protein aggregation proteotoxicity; may act in parallel with the Insulin/IGF-1-like signaling (IIS) mediated pathway. Plays a role in modulating autophagy, in response to a moderate and short-term heat shock, also known as a hormetic heat shock. Involved in positive modulation of ascaroside pheromone biosynthesis in response to heat shock, perhaps by directly activating transcription of peroxisomal fatty acid beta-oxidation genes. Required in modulating the response to infection by either Gram-negative or Gram-positive bacteria, perhaps acting via regulation of expression of Hsp90/daf-21 and members of the small heat shock protein (HSP20) family. May play a role downstream of the daf-16/FOXO and daf-2 signaling pathway in response to bacterial pathogens. Modulates expression of multiple microRNA genes, in both heat shock-dependent and -independent manner. Independent of heat shock, required to modulate expression of genes involved in larval development, mainly distinct from HSPs; acts in concert with putative transcription factor efl-1/E2F, which may form part of a multiprotein DRM complex. Independent of heat shock, involved in promoting death of the linker cell, a male-specific cell which guides the elongation of the gonad; perhaps acting by modulating expression of ubiquitin-conjugating enzyme let-70. Plays a role in egg-laying. This Caenorhabditis elegans protein is Heat shock transcription factor hsf-1.